We begin with the raw amino-acid sequence, 191 residues long: MQYDIASIIQGYAQGYFLMADDNDCLGWYGSRDRTLIPLDERFRYPKSLQRVLNQERFTVAINRDFAAVVAGCANRESTWISQELQEIYRLLYQTGYAYSFETWQGEELAGGILGIVIGGAFIGESMFYRIPEGSKVAMVKLVERLRQREFVMFDAQMMNPHLERFGAYRIKDKEYKTLLEKALLSPSTLI.

The protein belongs to the L/F-transferase family.

It localises to the cytoplasm. The catalysed reaction is N-terminal L-lysyl-[protein] + L-leucyl-tRNA(Leu) = N-terminal L-leucyl-L-lysyl-[protein] + tRNA(Leu) + H(+). The enzyme catalyses N-terminal L-arginyl-[protein] + L-leucyl-tRNA(Leu) = N-terminal L-leucyl-L-arginyl-[protein] + tRNA(Leu) + H(+). It catalyses the reaction L-phenylalanyl-tRNA(Phe) + an N-terminal L-alpha-aminoacyl-[protein] = an N-terminal L-phenylalanyl-L-alpha-aminoacyl-[protein] + tRNA(Phe). In terms of biological role, functions in the N-end rule pathway of protein degradation where it conjugates Leu, Phe and, less efficiently, Met from aminoacyl-tRNAs to the N-termini of proteins containing an N-terminal arginine or lysine. This Nostoc sp. (strain PCC 7120 / SAG 25.82 / UTEX 2576) protein is Leucyl/phenylalanyl-tRNA--protein transferase.